The following is an 81-amino-acid chain: Three-finger toxin A1 (81 aa).

A signal peptide spans 1 to 21 (MKTLLLTLVVVTIVCLDFGHT). 4 disulfide bridges follow: Cys-24/Cys-43, Cys-38/Cys-60, Cys-62/Cys-73, and Cys-74/Cys-79.

The protein belongs to the three-finger toxin family. Short-chain subfamily. Type I alpha-neurotoxin sub-subfamily. Expressed by the venom gland.

It localises to the secreted. Binds and inhibits fetal (alpha-1-beta-1-gamma-delta/CHRNA1-CHRNB1-CHRNG-CHRND, IC(50)=1.4 nM), adult (alpha-1-beta-1-delta-epsilon/CHRNA1-CHRNB1-CHRND-CHRNE, IC(50)=12 nM) and neuronal alpha-7/CHRNA7 (IC(50)=400 nM) nicotinic acetylcholine receptors (nAChR) thereby impairing neuromuscular and neuronal transmissions. This Micrurus laticollaris (Balsas coral snake) protein is Three-finger toxin A1.